The chain runs to 205 residues: Meiotic nuclear division protein 1 homolog (205 aa).

The stretch at 79–147 (LHARKRKLET…CADLEKYKEC (69 aa)) forms a coiled coil.

This sequence belongs to the MND1 family.

Its subcellular location is the nucleus. Its function is as follows. Required for proper homologous chromosome pairing and efficient cross-over and intragenic recombination during meiosis. Stimulates both dmc1- and rad51-mediated homologous strand assimilation, which is required for the resolution of meiotic double-strand breaks. The protein is Meiotic nuclear division protein 1 homolog of Xenopus laevis (African clawed frog).